The following is a 306-amino-acid chain: D-alanine--D-alanine ligase (306 aa).

The ATP-grasp domain occupies 101 to 303; the sequence is KQVWQAVGLP…FSQLVVKILE (203 aa). An ATP-binding site is contributed by 134 to 189; the sequence is FTHLGLPLIVKPSREGSSVGMSKVNTLSDLPAALEEAFRHDDDVLVEKWLSGPEYT. Asp-257, Glu-270, and Asn-272 together coordinate Mg(2+).

The protein belongs to the D-alanine--D-alanine ligase family. The cofactor is Mg(2+). Mn(2+) is required as a cofactor.

The protein localises to the cytoplasm. It carries out the reaction 2 D-alanine + ATP = D-alanyl-D-alanine + ADP + phosphate + H(+). The protein operates within cell wall biogenesis; peptidoglycan biosynthesis. Cell wall formation. In Pectobacterium atrosepticum (strain SCRI 1043 / ATCC BAA-672) (Erwinia carotovora subsp. atroseptica), this protein is D-alanine--D-alanine ligase.